Reading from the N-terminus, the 185-residue chain is MELKGTTILAVRDADGVAMAGDGQVTMGQSVVMKHTARKVRRLYRDRVLAGFAGATADAFTLFERFEAKLEEFGGNLTRAAVELAKDWRKDKYLRRLEAMLLVADAETILILTGTGDVIEPDDGIAAIGSGGPYALSAARALSRHTTLDAETVVREAMAVAGELCVFTNGHLTVETLRRNGGATT.

Residue T6 is part of the active site. G162, C165, and T168 together coordinate Na(+).

The protein belongs to the peptidase T1B family. HslV subfamily. In terms of assembly, a double ring-shaped homohexamer of HslV is capped on each side by a ring-shaped HslU homohexamer. The assembly of the HslU/HslV complex is dependent on binding of ATP.

Its subcellular location is the cytoplasm. The catalysed reaction is ATP-dependent cleavage of peptide bonds with broad specificity.. Its activity is regulated as follows. Allosterically activated by HslU binding. In terms of biological role, protease subunit of a proteasome-like degradation complex believed to be a general protein degrading machinery. This Nitratidesulfovibrio vulgaris (strain DSM 19637 / Miyazaki F) (Desulfovibrio vulgaris) protein is ATP-dependent protease subunit HslV.